A 268-amino-acid chain; its full sequence is Hydroxyethylthiazole kinase 2 (268 aa).

Methionine 42 lines the substrate pocket. ATP-binding residues include lysine 117 and threonine 167. Glycine 194 lines the substrate pocket.

The protein belongs to the Thz kinase family. Requires Mg(2+) as cofactor.

The enzyme catalyses 5-(2-hydroxyethyl)-4-methylthiazole + ATP = 4-methyl-5-(2-phosphooxyethyl)-thiazole + ADP + H(+). The protein operates within cofactor biosynthesis; thiamine diphosphate biosynthesis; 4-methyl-5-(2-phosphoethyl)-thiazole from 5-(2-hydroxyethyl)-4-methylthiazole: step 1/1. Catalyzes the phosphorylation of the hydroxyl group of 4-methyl-5-beta-hydroxyethylthiazole (THZ). The protein is Hydroxyethylthiazole kinase 2 of Streptococcus pneumoniae (strain CGSP14).